A 218-amino-acid chain; its full sequence is Thiopurine S-methyltransferase (218 aa).

S-adenosyl-L-methionine is bound by residues Trp10, Leu45, Glu66, and Arg123.

It belongs to the class I-like SAM-binding methyltransferase superfamily. TPMT family.

The protein resides in the cytoplasm. It catalyses the reaction S-adenosyl-L-methionine + a thiopurine = S-adenosyl-L-homocysteine + a thiopurine S-methylether.. This Shewanella baltica (strain OS185) protein is Thiopurine S-methyltransferase.